We begin with the raw amino-acid sequence, 106 residues long: Nucleoid-associated protein XAC1110 (106 aa).

Positions Lys80–Met89 are enriched in basic and acidic residues. Residues Lys80–Phe106 form a disordered region.

Belongs to the YbaB/EbfC family. Homodimer.

Its subcellular location is the cytoplasm. The protein localises to the nucleoid. Functionally, binds to DNA and alters its conformation. May be involved in regulation of gene expression, nucleoid organization and DNA protection. The polypeptide is Nucleoid-associated protein XAC1110 (Xanthomonas axonopodis pv. citri (strain 306)).